The following is a 953-amino-acid chain: Probable LRR receptor-like serine/threonine-protein kinase At1g53420 (953 aa).

An N-terminal signal peptide occupies residues 1–22 (MSLNRFLFTSFSFFLFFIVHFA). At 23–566 (SSATLPTQEG…SPRNGMSTGT (544 aa)) the chain is on the extracellular side. LRR repeat units follow at residues 63 to 86 (WSTI…LVGL), 88 to 110 (LLQE…WGVL), 111 to 132 (PLVN…EFGN), 135 to 158 (TLTS…GNLP), 159 to 182 (NIQQ…AKLT), and 183 to 205 (TLRD…IQKW). N100 and N132 each carry an N-linked (GlcNAc...) asparagine glycan. N-linked (GlcNAc...) asparagine glycans are attached at residues N265, N315, N335, N378, and N423. Residues 567–587 (LHTLVVILSIFIVFLVFGTLW) form a helical membrane-spanning segment. At 588–953 (KKGYLRSKSQ…SDRSESSADH (366 aa)) the chain is on the cytoplasmic side. One can recognise a Protein kinase domain in the interval 624 to 901 (FDSANRIGEG…VKMLEGKKMV (278 aa)). ATP-binding positions include 630–638 (IGEGGFGPV) and K652. Y697 carries the post-translational modification Phosphotyrosine. The Proton acceptor role is filled by D750. A Phosphoserine modification is found at S783. Residues T784 and T789 each carry the phosphothreonine modification. Y797 carries the post-translational modification Phosphotyrosine.

Belongs to the protein kinase superfamily. Ser/Thr protein kinase family.

The protein resides in the membrane. The enzyme catalyses L-seryl-[protein] + ATP = O-phospho-L-seryl-[protein] + ADP + H(+). The catalysed reaction is L-threonyl-[protein] + ATP = O-phospho-L-threonyl-[protein] + ADP + H(+). The sequence is that of Probable LRR receptor-like serine/threonine-protein kinase At1g53420 from Arabidopsis thaliana (Mouse-ear cress).